A 632-amino-acid polypeptide reads, in one-letter code: Mitochondrial distribution and morphology protein 34 (632 aa).

One can recognise an SMP-LTD domain in the interval 1–203 (MSFKVNWNSL…LPTLIHQLSL (203 aa)). Disordered stretches follow at residues 221-253 (ANAS…TSSL) and 384-435 (KPKR…SSTL). Residues 224–252 (STSSSSTSSTSSSTTSSSSSSSPSSFTSS) are compositionally biased toward low complexity. Positions 384–400 (KPKRRVIRLGKSKNKSK) are enriched in basic residues. The span at 401–412 (SKTETKTEHNDE) shows a compositional bias: basic and acidic residues. The segment covering 422 to 435 (PLSSTPASSSSSTL) has biased composition (low complexity).

The protein belongs to the MDM34 family. As to quaternary structure, component of the ER-mitochondria encounter structure (ERMES) or MDM complex, composed of MMM1, MDM10, MDM12 and MDM34.

The protein localises to the mitochondrion outer membrane. Component of the ERMES/MDM complex, which serves as a molecular tether to connect the endoplasmic reticulum (ER) and mitochondria. Components of this complex are involved in the control of mitochondrial shape and protein biogenesis, and function in nonvesicular lipid trafficking between the ER and mitochondria. MDM34 is required for the interaction of the ER-resident membrane protein MMM1 and the outer mitochondrial membrane-resident beta-barrel protein MDM10. The polypeptide is Mitochondrial distribution and morphology protein 34 (Lodderomyces elongisporus (strain ATCC 11503 / CBS 2605 / JCM 1781 / NBRC 1676 / NRRL YB-4239) (Yeast)).